A 162-amino-acid polypeptide reads, in one-letter code: uncharacterized protein (162 aa).

This is an uncharacterized protein from Aedes vexans (Inland floodwater mosquito).